The primary structure comprises 701 residues: Elongation factor G (701 aa).

One can recognise a tr-type G domain in the interval 8-290 (ERYRNIGISA…AVVDYLPAPT (283 aa)). GTP is bound by residues 17–24 (AHIDAGKT), 88–92 (DTPGH), and 142–145 (NKMD).

It belongs to the TRAFAC class translation factor GTPase superfamily. Classic translation factor GTPase family. EF-G/EF-2 subfamily.

The protein localises to the cytoplasm. In terms of biological role, catalyzes the GTP-dependent ribosomal translocation step during translation elongation. During this step, the ribosome changes from the pre-translocational (PRE) to the post-translocational (POST) state as the newly formed A-site-bound peptidyl-tRNA and P-site-bound deacylated tRNA move to the P and E sites, respectively. Catalyzes the coordinated movement of the two tRNA molecules, the mRNA and conformational changes in the ribosome. The sequence is that of Elongation factor G from Aeromonas hydrophila subsp. hydrophila (strain ATCC 7966 / DSM 30187 / BCRC 13018 / CCUG 14551 / JCM 1027 / KCTC 2358 / NCIMB 9240 / NCTC 8049).